Here is a 312-residue protein sequence, read N- to C-terminus: Ribosomal RNA small subunit methyltransferase H (312 aa).

Residues 34 to 36 (GGH), Asp54, Phe81, Asp102, and Gln109 contribute to the S-adenosyl-L-methionine site.

This sequence belongs to the methyltransferase superfamily. RsmH family.

The protein localises to the cytoplasm. It catalyses the reaction cytidine(1402) in 16S rRNA + S-adenosyl-L-methionine = N(4)-methylcytidine(1402) in 16S rRNA + S-adenosyl-L-homocysteine + H(+). Specifically methylates the N4 position of cytidine in position 1402 (C1402) of 16S rRNA. This Geotalea uraniireducens (strain Rf4) (Geobacter uraniireducens) protein is Ribosomal RNA small subunit methyltransferase H.